We begin with the raw amino-acid sequence, 603 residues long: Adenine deaminase (603 aa).

Belongs to the metallo-dependent hydrolases superfamily. Adenine deaminase family. As to quaternary structure, homodimer. Mn(2+) is required as a cofactor.

It catalyses the reaction adenine + H2O + H(+) = hypoxanthine + NH4(+). This chain is Adenine deaminase, found in Klebsiella pneumoniae (strain 342).